A 598-amino-acid chain; its full sequence is MKQIRNFSIIAHIDHGKSTLSDRIIQICGGLTDREMAEQVLDSMDLERERGITIKAQSVTLDYKANDGQLYQLNFIDTPGHVDFSYEVSRSLAACEGALLVVDAGQGVEAQTLANCYTALDMNLEVVPVLNKIDLPAAEPERVAEEIEDIVGIDATDAVRCSAKTGVGVQDVIERLVKEIPAPEGNSDEPLQALIIDSWFDNYLGVVSLVRIKNGTLRKGDKIKVMSTGQVYNADRLGIFTPKRVDRDVLGCGEVGWLVCAIKDILGAPVGDTLTLARQPAEKPLPGFKKVKPQVYAGLFPVSSDDYEAFRDALGKLSLNDASLFYEPESSSALGFGFRCGFLGLLHMEIIQERLEREYDLDLITTAPTVVYEVETTSHDTLYVDSPSKLPPLNNIEELREPIAECHMLLPQEYLGNVITLCVEKRGVQTNMVYHGKQVALTYEIPMAEVVLDFFDRLKSTSRGYASLDYNFTRFQSSDMVRVDVLINAERVDALALITHRGNAQYRGRELVEKMKELIPRQQFDIAIQAAIGNHIIARSTVKQLRKNVLAKCYGGDVSRKKKLLQKQKEGKKRMKQVGNVELPQEAFLAILHVGKDN.

In terms of domain architecture, tr-type G spans 2 to 184 (KQIRNFSIIA…RLVKEIPAPE (183 aa)). Residues 14–19 (DHGKST) and 131–134 (NKID) each bind GTP.

This sequence belongs to the TRAFAC class translation factor GTPase superfamily. Classic translation factor GTPase family. LepA subfamily.

The protein localises to the cell inner membrane. It carries out the reaction GTP + H2O = GDP + phosphate + H(+). Required for accurate and efficient protein synthesis under certain stress conditions. May act as a fidelity factor of the translation reaction, by catalyzing a one-codon backward translocation of tRNAs on improperly translocated ribosomes. Back-translocation proceeds from a post-translocation (POST) complex to a pre-translocation (PRE) complex, thus giving elongation factor G a second chance to translocate the tRNAs correctly. Binds to ribosomes in a GTP-dependent manner. The chain is Elongation factor 4 from Photorhabdus laumondii subsp. laumondii (strain DSM 15139 / CIP 105565 / TT01) (Photorhabdus luminescens subsp. laumondii).